Consider the following 185-residue polypeptide: Threonylcarbamoyl-AMP synthase (185 aa).

Residues 4-185 (SWRVQQAARE…LATGEIVRPG (182 aa)) enclose the YrdC-like domain.

It belongs to the SUA5 family. TsaC subfamily.

The protein localises to the cytoplasm. The catalysed reaction is L-threonine + hydrogencarbonate + ATP = L-threonylcarbamoyladenylate + diphosphate + H2O. Functionally, required for the formation of a threonylcarbamoyl group on adenosine at position 37 (t(6)A37) in tRNAs that read codons beginning with adenine. Catalyzes the conversion of L-threonine, HCO(3)(-)/CO(2) and ATP to give threonylcarbamoyl-AMP (TC-AMP) as the acyladenylate intermediate, with the release of diphosphate. The chain is Threonylcarbamoyl-AMP synthase from Pseudomonas putida (strain W619).